We begin with the raw amino-acid sequence, 258 residues long: Short-chain dehydrogenase chyC (258 aa).

NADP(+) is bound by residues arginine 37, aspartate 55, asparagine 81, tyrosine 154, lysine 158, valine 185, and threonine 187. Tyrosine 154 serves as the catalytic Proton donor. The active-site Lowers pKa of active site Tyr is the lysine 158.

The protein belongs to the short-chain dehydrogenases/reductases (SDR) family.

Functionally, short-chain dehydrogenase; part of the gene cluster that mediates the biosynthesis of the yellow pigment chrysogine. the NRPS chyA mediates the condensation of anthranilic acid and alanine into the intermediate 2-(2-aminopropanamido)benzoic acid. The remainder of the pathway is highly branched yielding at least 13 chrysogine-related compounds. The malonyl transferase chyE converts 2-(2-aminopropanamido)benzoic acid and 2-(2-aminopropanamido)benzamidine into 2-(2-(2-carboxyacetamido)propanamido)benzoic acid and 3-((1-((2-carbamoylphenyl)amino)-1-oxopropan-2-yl)amino)-3-oxopropanoic acid, respectively. ChyD is an amidase, being responsible for the amidation of the carboxylic acid moiety of 2-(2-aminopropanamido)benzoic acid, 2-(2-(2-carboxyacetamido)propanamido)benzoic acid and 2-(2-((4-amino-1-carboxy-4-oxobutyl)amino)propanamido)benzoic acid. ChyC is involved in the same reactions as ChyD, but plays a more minor role in the amidation reactions compared to chyD. The oxidoreductases chyH and chyM are involved in oxidation reactions that form N-pyruvoylanthranilamide from 2-(2-aminopropanamido)benzamidine and (1-((2-carbamoylphenyl)amino)-1-oxopropan-2-yl)glutamine, respectively. N-pyruvoylanthranilamide is further converted via two further branches in the pathway, yielding chrysogine and additional chrysogine-related coumpounds. Chrysogine is likely formed by a spontaneous ring closure from N-pyruvoylanthranilamide. The protein is Short-chain dehydrogenase chyC of Penicillium rubens (strain ATCC 28089 / DSM 1075 / NRRL 1951 / Wisconsin 54-1255) (Penicillium chrysogenum).